We begin with the raw amino-acid sequence, 481 residues long: MVLKVFKDHFGRGYEVYEKSYREKDSLSFFLTKEEEGKILVVAGEKAPEGLSFFKKQRAEGVSFFFCERNHENLEVLRKYFPDLKPVRAGLRASFGTGDRLGITTPAHVRALKDSGLFPIFAQQSVRENERTGRTWRDVLDDATWGVFQEGYSEGFGADADHVKRPEDLVSAAREGFTMFTIDPSDHVRNLSKLTEKERNEKFEEILRKERIDRIYLGKKYSVLGEKIEFDEKNLRDAALVYYDAIAHVDMMYQILKDETPDFDFEVSVDETETPTSPLFHIFVVEELRRRGVEFTNLALRFIGEWEKGIDYKGDLAQFEREIKMHAEIARMFEGYKISLHSGSDKFSVYPAFASATGGLFHVKTAGTSYLEAVKVISMVNPELFREIYRCTLDHFEEDRKSYHISADLSKVPEVEKVKDEDLPGLFEDINVRQLIHVTYGSVLKDASLKERLFKTLEQNEELFYETVAKHIKRHVDLLEG.

Residue Asp-161 is the Proton acceptor of the active site. A divalent metal cation is bound at residue His-162. Catalysis depends on Glu-266, which acts as the Proton donor. Residues Lys-308 and His-341 each contribute to the a divalent metal cation site.

This sequence belongs to the UxaE family. A divalent metal cation is required as a cofactor.

It catalyses the reaction keto-D-tagaturonate = keto-D-fructuronate. Its function is as follows. Catalyzes the epimerization of D-tagaturonate (D-TagA) to D-fructuronate (D-FruA). The polypeptide is Tagaturonate/fructuronate epimerase (Thermotoga maritima (strain ATCC 43589 / DSM 3109 / JCM 10099 / NBRC 100826 / MSB8)).